Consider the following 512-residue polypeptide: Glutathione-binding protein GsiB (512 aa).

The signal sequence occupies residues 1 to 26 (MTQFITHKWLAALGLASSIAAFPALA).

It belongs to the bacterial solute-binding protein 5 family. The complex is composed of two ATP-binding proteins (GsiA), two transmembrane proteins (GsiC and GsiD) and a solute-binding protein (GsiB).

It is found in the periplasm. Functionally, part of the ABC transporter complex GsiABCD involved in glutathione import. Binds glutathione. In Salmonella typhimurium (strain LT2 / SGSC1412 / ATCC 700720), this protein is Glutathione-binding protein GsiB.